The following is a 1132-amino-acid chain: APC membrane recruitment protein 1 (1132 aa).

Methionine 1 is modified (N-acetylmethionine). Over residues 1–21 (MESQQDEAVQTKGASTSSDAQ) the composition is skewed to polar residues. Disordered stretches follow at residues 1–256 (MESQ…ACKN), 268–301 (FMQP…NPPN), 338–423 (SMTD…GEEN), 469–505 (GLGE…DSGE), 674–699 (TSGG…EPDW), 736–770 (MQEA…GNAT), 924–949 (ELQA…DSPL), and 1038–1132 (SQAS…NLAK). Over residues 24–35 (GAEKGAKNKTTE) the composition is skewed to basic and acidic residues. Positions 121–133 (SKSSAQFPSSQSA) are enriched in low complexity. Basic and acidic residues-rich tracts occupy residues 195–208 (KELE…HEHV), 218–229 (EIFRDTRKENAK), and 281–290 (EEPHTSETEG). Over residues 372–423 (ALPDDDDNDDEEEEEEEEEEEEEEEEEEEEEEEEEEEELLEDEEEVKDGEEN) the composition is skewed to acidic residues. Composition is skewed to polar residues over residues 475-486 (TPQSDQQESAPN) and 677-696 (GSQT…SSSE). 2 stretches are compositionally biased toward acidic residues: residues 756-765 (EEPEEEEEEK) and 931-941 (DSDEEGEEEEG). 2 stretches are compositionally biased toward polar residues: residues 1059 to 1072 (SCSS…QSQA) and 1115 to 1132 (ASLS…NLAK).

This sequence belongs to the Amer family. As to quaternary structure, interacts with CTNNB1, AXIN1, LRP6, KEAP1, APC and BTRC. Interacts with SCF (SKP1-CUL1-F-box protein) E3 ubiquitin-protein ligase complexes containing BTRC and/or FBXW11. Identified in the beta-catenin destruction complex containing CTNNB1, APC, AXIN1 and AXIN2. Interacts with WT1. Expressed in kidney.

The protein localises to the cytoplasm. The protein resides in the cell membrane. Its subcellular location is the nucleus. In terms of biological role, regulator of the canonical Wnt signaling pathway. Acts by specifically binding phosphatidylinositol 4,5-bisphosphate (PtdIns(4,5)P2), translocating to the cell membrane and interacting with key regulators of the canonical Wnt signaling pathway, such as components of the beta-catenin destruction complex. Acts both as a positive and negative regulator of the Wnt signaling pathway, depending on the context: acts as a positive regulator by promoting LRP6 phosphorylation. Also acts as a negative regulator by acting as a scaffold protein for the beta-catenin destruction complex and promoting stabilization of Axin at the cell membrane. Promotes CTNNB1 ubiquitination and degradation. Involved in kidney development. This is APC membrane recruitment protein 1 (Amer1) from Mus musculus (Mouse).